The primary structure comprises 299 residues: Non-homologous end joining protein Ku (299 aa).

One can recognise a Ku domain in the interval 10 to 188; that stretch reads ISFGLVHIPV…TEAVTDARLT (179 aa). 2 disordered regions span residues 227 to 249 and 261 to 299; these read AGEG…SADV and AGKS…GKAS. Basic and acidic residues predominate over residues 273–283; that stretch reads AAKDKVADKQS. The span at 284–299 shows a compositional bias: basic residues; sequence PKPKRPAVRKKTGKAS.

This sequence belongs to the prokaryotic Ku family. Homodimer. Interacts with LigD.

In terms of biological role, with LigD forms a non-homologous end joining (NHEJ) DNA repair enzyme, which repairs dsDNA breaks with reduced fidelity. Binds linear dsDNA with 5'- and 3'- overhangs but not closed circular dsDNA nor ssDNA. Recruits and stimulates the ligase activity of LigD. The polypeptide is Non-homologous end joining protein Ku (Pseudomonas syringae pv. tomato (strain ATCC BAA-871 / DC3000)).